Reading from the N-terminus, the 326-residue chain is UDP-3-O-acylglucosamine N-acyltransferase (326 aa).

H225 serves as the catalytic Proton acceptor.

Belongs to the transferase hexapeptide repeat family. LpxD subfamily. As to quaternary structure, homotrimer.

The enzyme catalyses a UDP-3-O-[(3R)-3-hydroxyacyl]-alpha-D-glucosamine + a (3R)-hydroxyacyl-[ACP] = a UDP-2-N,3-O-bis[(3R)-3-hydroxyacyl]-alpha-D-glucosamine + holo-[ACP] + H(+). It participates in bacterial outer membrane biogenesis; LPS lipid A biosynthesis. In terms of biological role, catalyzes the N-acylation of UDP-3-O-acylglucosamine using 3-hydroxyacyl-ACP as the acyl donor. Is involved in the biosynthesis of lipid A, a phosphorylated glycolipid that anchors the lipopolysaccharide to the outer membrane of the cell. This is UDP-3-O-acylglucosamine N-acyltransferase from Verminephrobacter eiseniae (strain EF01-2).